We begin with the raw amino-acid sequence, 182 residues long: Large ribosomal subunit protein uL5 (182 aa).

This sequence belongs to the universal ribosomal protein uL5 family. Part of the 50S ribosomal subunit; part of the 5S rRNA/L5/L18/L25 subcomplex. Contacts the 5S rRNA and the P site tRNA. Forms a bridge to the 30S subunit in the 70S ribosome.

Functionally, this is one of the proteins that bind and probably mediate the attachment of the 5S RNA into the large ribosomal subunit, where it forms part of the central protuberance. In the 70S ribosome it contacts protein S13 of the 30S subunit (bridge B1b), connecting the 2 subunits; this bridge is implicated in subunit movement. Contacts the P site tRNA; the 5S rRNA and some of its associated proteins might help stabilize positioning of ribosome-bound tRNAs. This chain is Large ribosomal subunit protein uL5, found in Borrelia garinii subsp. bavariensis (strain ATCC BAA-2496 / DSM 23469 / PBi) (Borreliella bavariensis).